We begin with the raw amino-acid sequence, 450 residues long: Phosphoglucosamine mutase 2 (450 aa).

Serine 101 serves as the catalytic Phosphoserine intermediate. Residues serine 101, aspartate 245, aspartate 247, and aspartate 249 each coordinate Mg(2+). Residue serine 101 is modified to Phosphoserine.

It belongs to the phosphohexose mutase family. Mg(2+) is required as a cofactor. Activated by phosphorylation.

The catalysed reaction is alpha-D-glucosamine 1-phosphate = D-glucosamine 6-phosphate. In terms of biological role, catalyzes the conversion of glucosamine-6-phosphate to glucosamine-1-phosphate. The polypeptide is Phosphoglucosamine mutase 2 (Shewanella frigidimarina (strain NCIMB 400)).